The following is a 385-amino-acid chain: Serine/threonine-protein kinase SBK1 (385 aa).

One can recognise a Protein kinase domain in the interval 32-297; the sequence is YEVIRELGKG…VFAHLGHRWM (266 aa). Residues 38-46 and Lys61 each bind ATP; that span reads LGKGTYGKV. Residue Asp153 is the Proton acceptor of the active site. Polar residues predominate over residues 328 to 338; that stretch reads TLSPTANTSNA. A disordered region spans residues 328-374; the sequence is TLSPTANTSNAIEPGSANHFTSMSTNSSVSSTNSYERSARDSPPTSR. A compositionally biased stretch (low complexity) spans 348–361; sequence TSMSTNSSVSSTNS.

This sequence belongs to the protein kinase superfamily. Ser/Thr protein kinase family. As to expression, mainly expressed in brain.

The protein localises to the cytoplasm. It carries out the reaction L-seryl-[protein] + ATP = O-phospho-L-seryl-[protein] + ADP + H(+). The enzyme catalyses L-threonyl-[protein] + ATP = O-phospho-L-threonyl-[protein] + ADP + H(+). Functionally, may be involved in the control of neuronal proliferation or migration in the brain of embryos. The protein is Serine/threonine-protein kinase SBK1 (sbk1) of Danio rerio (Zebrafish).